A 602-amino-acid chain; its full sequence is Zinc finger MYND domain-containing protein 11 (602 aa).

The region spanning 6–82 (KRRQADTKAI…CKGSKAGIEQ (77 aa)) is the SAMD1-like winged helix (WH) domain. Residues 100–148 (DWYCFECHLPGEVLICDLCFRVYHSKCLSDEFRLRDSSSHWQCPVCRSI) form a PHD-type zinc finger. The 107-residue stretch at 149 to 255 (KKKHSNKQEM…KDTCHELDEL (107 aa)) folds into the Bromo domain. Residues Cys258, Cys261, Cys277, and His281 each contribute to the Zn(2+) site. Residues 280 to 331 (NHELVWAKMKGFGFWPAKVMQKEDNQVDVRFFGHHHQRAWIPSENIQDITVN) form the PWWP domain. The segment at 291–310 (FGFWPAKVMQKEDNQVDVRF) is aromatic cage required for H3.3K36me3-specific binding. A Glycyl lysine isopeptide (Lys-Gly) (interchain with G-Cter in SUMO2) cross-link involves residue Lys366. A disordered region spans residues 366-461 (KNEDRGEEEA…HRSTQTTSDG (96 aa)). Positions 394–400 (RAKKGRR) match the Nuclear localization signal motif. Residues Lys407 and Lys408 each participate in a glycyl lysine isopeptide (Lys-Gly) (interchain with G-Cter in SUMO2) cross-link. The residue at position 421 (Ser421) is a Phosphoserine. The span at 435–461 (SVSTQTKKLSASSPRMLHRSTQTTSDG) shows a compositional bias: polar residues. Zn(2+) contacts are provided by Cys563, Cys566, Cys574, Cys575, Cys581, Cys585, His594, and Cys598. An MYND-type zinc finger spans residues 563 to 598 (CYNCEEEAMYHCCWNTSYCSIKCQQEHWHAEHKRTC).

Homooligomer; forms homooligomers via its C-terminus. Interacts with histone H3.3 trimethylated at 'Lys-36' (H3.3K36me3). Interacts (via MYND-type zinc finger) with NCOR1. Interacts (via MYND-type zinc finger) with MGA protein (via PXLXP motif). Interacts (via MYND-type zinc finger) with EZH2. Interacts with EMSY and E2F6. Interacts with PIAS1 and UBE2I. In terms of processing, ubiquitinated, leading to proteasomal degradation. Sumoylated following its interaction with PIAS1 and UBE2I.

The protein resides in the nucleus. Its subcellular location is the chromosome. Functionally, chromatin reader that specifically recognizes and binds histone H3.3 trimethylated at 'Lys-36' (H3.3K36me3) and regulates RNA polymerase II elongation. Does not bind other histone H3 subtypes (H3.1 or H3.2). Colocalizes with highly expressed genes and functions as a transcription corepressor by modulating RNA polymerase II at the elongation stage. Binds non-specifically to dsDNA. Acts as a tumor-suppressor by repressing a transcriptional program essential for tumor cell growth. The sequence is that of Zinc finger MYND domain-containing protein 11 (Zmynd11) from Mus musculus (Mouse).